The chain runs to 970 residues: Bifunctional glutamine synthetase adenylyltransferase/adenylyl-removing enzyme (970 aa).

Positions 1–454 (MNSLPPRPSL…HFQQVFAAPQ (454 aa)) are adenylyl removase. The interval 468–970 (QAVLASIWAG…WRRVMEEGKA (503 aa)) is adenylyl transferase.

This sequence belongs to the GlnE family. Mg(2+) serves as cofactor.

The catalysed reaction is [glutamine synthetase]-O(4)-(5'-adenylyl)-L-tyrosine + phosphate = [glutamine synthetase]-L-tyrosine + ADP. The enzyme catalyses [glutamine synthetase]-L-tyrosine + ATP = [glutamine synthetase]-O(4)-(5'-adenylyl)-L-tyrosine + diphosphate. Its function is as follows. Involved in the regulation of glutamine synthetase GlnA, a key enzyme in the process to assimilate ammonia. When cellular nitrogen levels are high, the C-terminal adenylyl transferase (AT) inactivates GlnA by covalent transfer of an adenylyl group from ATP to specific tyrosine residue of GlnA, thus reducing its activity. Conversely, when nitrogen levels are low, the N-terminal adenylyl removase (AR) activates GlnA by removing the adenylyl group by phosphorolysis, increasing its activity. The regulatory region of GlnE binds the signal transduction protein PII (GlnB) which indicates the nitrogen status of the cell. The polypeptide is Bifunctional glutamine synthetase adenylyltransferase/adenylyl-removing enzyme (Thioalkalivibrio sulfidiphilus (strain HL-EbGR7)).